The primary structure comprises 310 residues: Malate dehydrogenase (310 aa).

NAD(+)-binding positions include 7 to 12 (GAGNVG) and aspartate 32. Positions 81 and 87 each coordinate substrate. Residues asparagine 94 and 117–119 (VSN) each bind NAD(+). Substrate contacts are provided by asparagine 119 and arginine 150. Residue histidine 174 is the Proton acceptor of the active site.

It belongs to the LDH/MDH superfamily. MDH type 3 family.

The enzyme catalyses (S)-malate + NAD(+) = oxaloacetate + NADH + H(+). Its function is as follows. Catalyzes the reversible oxidation of malate to oxaloacetate. This Chlorobium limicola (strain DSM 245 / NBRC 103803 / 6330) protein is Malate dehydrogenase.